The following is a 303-amino-acid chain: Pyridoxal 5'-phosphate synthase subunit PdxS (303 aa).

Residue aspartate 33 coordinates D-ribose 5-phosphate. Catalysis depends on lysine 90, which acts as the Schiff-base intermediate with D-ribose 5-phosphate. Glycine 162 is a D-ribose 5-phosphate binding site. A D-glyceraldehyde 3-phosphate-binding site is contributed by arginine 174. D-ribose 5-phosphate is bound by residues glycine 223 and 244-245 (GS).

The protein belongs to the PdxS/SNZ family. In terms of assembly, in the presence of PdxT, forms a dodecamer of heterodimers.

It carries out the reaction aldehydo-D-ribose 5-phosphate + D-glyceraldehyde 3-phosphate + L-glutamine = pyridoxal 5'-phosphate + L-glutamate + phosphate + 3 H2O + H(+). The protein operates within cofactor biosynthesis; pyridoxal 5'-phosphate biosynthesis. In terms of biological role, catalyzes the formation of pyridoxal 5'-phosphate from ribose 5-phosphate (RBP), glyceraldehyde 3-phosphate (G3P) and ammonia. The ammonia is provided by the PdxT subunit. Can also use ribulose 5-phosphate and dihydroxyacetone phosphate as substrates, resulting from enzyme-catalyzed isomerization of RBP and G3P, respectively. This Mycolicibacterium smegmatis (strain ATCC 700084 / mc(2)155) (Mycobacterium smegmatis) protein is Pyridoxal 5'-phosphate synthase subunit PdxS.